Here is a 107-residue protein sequence, read N- to C-terminus: Nucleoid-associated protein A1E_05550 (107 aa).

It belongs to the YbaB/EbfC family. As to quaternary structure, homodimer.

The protein resides in the cytoplasm. The protein localises to the nucleoid. Its function is as follows. Binds to DNA and alters its conformation. May be involved in regulation of gene expression, nucleoid organization and DNA protection. The protein is Nucleoid-associated protein A1E_05550 of Rickettsia canadensis (strain McKiel).